Consider the following 788-residue polypeptide: Protocadherin beta-18 (788 aa).

The first 28 residues, 1–28, serve as a signal peptide directing secretion; sequence MEPGKGRAQPTRQVLLFFVFLGGSLVYS. Cadherin domains are found at residues 29-133, 134-242, 243-347, 348-452, and 453-562; these read ETWS…TPTF, LNNH…APEF, EKPV…PPEI, AMTS…APAF, and TQTS…SPFV. The Extracellular segment spans residues 29–691; sequence ETWSYSIAEE…AQADSLTVYL (663 aa). N-linked (GlcNAc...) asparagine glycosylation is present at Asn169. Residues Asn419 and Asn437 are each glycosylated (N-linked (GlcNAc...) asparagine). The N-linked (GlcNAc...) asparagine glycan is linked to Asn568. One can recognise a Cadherin 6 domain in the interval 569–672; that stretch reads GSAPCTELVP…LVDGFSQPYL (104 aa). A helical transmembrane segment spans residues 692 to 712; it reads VVALASVSSLFLFSVFLFVAV. The Cytoplasmic segment spans residues 713–788; that stretch reads RLCRRSRAAS…DSDMEKAPPF (76 aa).

Its subcellular location is the cell membrane. Potential calcium-dependent cell-adhesion protein. The protein is Protocadherin beta-18 (PCDHB18) of Pan troglodytes (Chimpanzee).